The sequence spans 229 residues: 2-C-methyl-D-erythritol 4-phosphate cytidylyltransferase (229 aa).

The protein belongs to the IspD/TarI cytidylyltransferase family. IspD subfamily.

The enzyme catalyses 2-C-methyl-D-erythritol 4-phosphate + CTP + H(+) = 4-CDP-2-C-methyl-D-erythritol + diphosphate. The protein operates within isoprenoid biosynthesis; isopentenyl diphosphate biosynthesis via DXP pathway; isopentenyl diphosphate from 1-deoxy-D-xylulose 5-phosphate: step 2/6. Its function is as follows. Catalyzes the formation of 4-diphosphocytidyl-2-C-methyl-D-erythritol from CTP and 2-C-methyl-D-erythritol 4-phosphate (MEP). The polypeptide is 2-C-methyl-D-erythritol 4-phosphate cytidylyltransferase (Clostridium botulinum (strain Langeland / NCTC 10281 / Type F)).